The chain runs to 418 residues: UDP-N-acetylglucosamine 1-carboxyvinyltransferase (418 aa).

Residue 22 to 23 (KN) coordinates phosphoenolpyruvate. Residue Arg-91 participates in UDP-N-acetyl-alpha-D-glucosamine binding. Cys-115 acts as the Proton donor in catalysis. The residue at position 115 (Cys-115) is a 2-(S-cysteinyl)pyruvic acid O-phosphothioketal. Residues 120-124 (RPVDL), Asp-305, and Ile-327 contribute to the UDP-N-acetyl-alpha-D-glucosamine site.

This sequence belongs to the EPSP synthase family. MurA subfamily.

The protein resides in the cytoplasm. The enzyme catalyses phosphoenolpyruvate + UDP-N-acetyl-alpha-D-glucosamine = UDP-N-acetyl-3-O-(1-carboxyvinyl)-alpha-D-glucosamine + phosphate. The protein operates within cell wall biogenesis; peptidoglycan biosynthesis. In terms of biological role, cell wall formation. Adds enolpyruvyl to UDP-N-acetylglucosamine. This Wigglesworthia glossinidia brevipalpis protein is UDP-N-acetylglucosamine 1-carboxyvinyltransferase.